We begin with the raw amino-acid sequence, 640 residues long: ESX-3 secretion system protein EccA3 (640 aa).

393-400 (GPPGTGKT) is an ATP binding site.

Belongs to the CbxX/CfxQ family. Part of the ESX-3 / type VII secretion system (T7SS), which is composed of cytosolic and membrane components.

Its subcellular location is the cytoplasm. Its function is as follows. Part of an ESX-3 / type VII specialized secretion system (T7SS), which exports several proteins. EccA3 exhibits ATPase activity and may provide energy for the export of ESX-3 substrates. The sequence is that of ESX-3 secretion system protein EccA3 from Mycobacterium leprae (strain TN).